The following is a 158-amino-acid chain: Transcriptional regulator MraZ (158 aa).

SpoVT-AbrB domains lie at 5-52 and 91-134; these read IYET…TFSS and AVEC…SQAE.

It belongs to the MraZ family. As to quaternary structure, forms oligomers.

The protein resides in the cytoplasm. It is found in the nucleoid. This is Transcriptional regulator MraZ from Geobacter sulfurreducens (strain ATCC 51573 / DSM 12127 / PCA).